We begin with the raw amino-acid sequence, 419 residues long: Light-independent protochlorophyllide reductase subunit N (419 aa).

C20, C45, and C102 together coordinate [4Fe-4S] cluster.

The protein belongs to the BchN/ChlN family. In terms of assembly, protochlorophyllide reductase is composed of three subunits; BchL, BchN and BchB. Forms a heterotetramer of two BchB and two BchN subunits. It depends on [4Fe-4S] cluster as a cofactor.

The enzyme catalyses chlorophyllide a + oxidized 2[4Fe-4S]-[ferredoxin] + 2 ADP + 2 phosphate = protochlorophyllide a + reduced 2[4Fe-4S]-[ferredoxin] + 2 ATP + 2 H2O. The protein operates within porphyrin-containing compound metabolism; bacteriochlorophyll biosynthesis (light-independent). Its function is as follows. Component of the dark-operative protochlorophyllide reductase (DPOR) that uses Mg-ATP and reduced ferredoxin to reduce ring D of protochlorophyllide (Pchlide) to form chlorophyllide a (Chlide). This reaction is light-independent. The NB-protein (BchN-BchB) is the catalytic component of the complex. In Chlorobaculum tepidum (strain ATCC 49652 / DSM 12025 / NBRC 103806 / TLS) (Chlorobium tepidum), this protein is Light-independent protochlorophyllide reductase subunit N.